The chain runs to 157 residues: Transcriptional repressor NrdR (157 aa).

Residues 1-22 (MRCPKCGATKSSVIDSRQAEEG) form a disordered region. A zinc finger lies at 3 to 34 (CPKCGATKSSVIDSRQAEEGNTIRRRRECDEC). Positions 49–139 (LVVVKKDGTR…VYRSFKDVSE (91 aa)) constitute an ATP-cone domain.

The protein belongs to the NrdR family. It depends on Zn(2+) as a cofactor.

Its function is as follows. Negatively regulates transcription of bacterial ribonucleotide reductase nrd genes and operons by binding to NrdR-boxes. The sequence is that of Transcriptional repressor NrdR from Streptococcus pneumoniae (strain Hungary19A-6).